The chain runs to 751 residues: Fusarisetin A cluster transcription factor fsa6 (751 aa).

The interval 1 to 35 is disordered; that stretch reads MADQAQDVRPTEWGPGKTPQGRARLPSSRPREKPQ. The segment at residues 38–66 is a DNA-binding region (zn(2)-C6 fungal-type); the sequence is CNLCRRRKLRCDRQRPCSSCAQRELGLSC. Polar residues predominate over residues 107 to 116; that stretch reads NVNAQDQVGA. Residues 107–153 are disordered; sequence NVNAQDQVGATPSPRGQPRGPDYPTPAAVHAPSTNEEPVSAAVSPAD.

Its subcellular location is the nucleus. In terms of biological role, transcription factor that regulates the expression of the gene cluster that mediates the biosynthesis of fusarisetin A. This chain is Fusarisetin A cluster transcription factor fsa6, found in Fusarium sp. (strain FN080326).